We begin with the raw amino-acid sequence, 396 residues long: S-adenosylmethionine synthase (396 aa).

His-15 contributes to the ATP binding site. Position 17 (Asp-17) interacts with Mg(2+). Glu-43 contributes to the K(+) binding site. L-methionine-binding residues include Glu-56 and Gln-99. Residues 99–109 (QSGDIAQGVDT) form a flexible loop region. ATP is bound by residues 173 to 175 (DGK), 241 to 242 (RF), Asp-250, 256 to 257 (RK), Ala-273, and Lys-277. L-methionine is bound at residue Asp-250. Residue Lys-281 coordinates L-methionine.

This sequence belongs to the AdoMet synthase family. Homotetramer; dimer of dimers. Requires Mg(2+) as cofactor. It depends on K(+) as a cofactor.

The protein resides in the cytoplasm. It carries out the reaction L-methionine + ATP + H2O = S-adenosyl-L-methionine + phosphate + diphosphate. The protein operates within amino-acid biosynthesis; S-adenosyl-L-methionine biosynthesis; S-adenosyl-L-methionine from L-methionine: step 1/1. Functionally, catalyzes the formation of S-adenosylmethionine (AdoMet) from methionine and ATP. The overall synthetic reaction is composed of two sequential steps, AdoMet formation and the subsequent tripolyphosphate hydrolysis which occurs prior to release of AdoMet from the enzyme. The polypeptide is S-adenosylmethionine synthase (Nocardioides sp. (strain ATCC BAA-499 / JS614)).